The primary structure comprises 521 residues: ATP synthase subunit beta (521 aa).

Composition is skewed to low complexity over residues 1–21 (MAKA…AAKA) and 28–42 (PKTT…TKSG). Positions 1 to 42 (MAKAATPKTTAAAEAKPAAKAPAKKAAPKTTAAAKPAATKSG) are disordered. 199–206 (GGAGVGKT) serves as a coordination point for ATP.

It belongs to the ATPase alpha/beta chains family. In terms of assembly, F-type ATPases have 2 components, CF(1) - the catalytic core - and CF(0) - the membrane proton channel. CF(1) has five subunits: alpha(3), beta(3), gamma(1), delta(1), epsilon(1). CF(0) has three main subunits: a(1), b(2) and c(9-12). The alpha and beta chains form an alternating ring which encloses part of the gamma chain. CF(1) is attached to CF(0) by a central stalk formed by the gamma and epsilon chains, while a peripheral stalk is formed by the delta and b chains.

It localises to the cell inner membrane. The catalysed reaction is ATP + H2O + 4 H(+)(in) = ADP + phosphate + 5 H(+)(out). Functionally, produces ATP from ADP in the presence of a proton gradient across the membrane. The catalytic sites are hosted primarily by the beta subunits. The polypeptide is ATP synthase subunit beta (Brucella canis (strain ATCC 23365 / NCTC 10854 / RM-666)).